Consider the following 414-residue polypeptide: Tryptophan synthase beta chain (414 aa).

The tract at residues 1-26 (MVSTFSRKNQNYKKDDLNQPSKDGRF) is disordered. The span at 12 to 26 (YKKDDLNQPSKDGRF) shows a compositional bias: basic and acidic residues. Position 109 is an N6-(pyridoxal phosphate)lysine (Lys109).

This sequence belongs to the TrpB family. In terms of assembly, tetramer of two alpha and two beta chains. The cofactor is pyridoxal 5'-phosphate.

It catalyses the reaction (1S,2R)-1-C-(indol-3-yl)glycerol 3-phosphate + L-serine = D-glyceraldehyde 3-phosphate + L-tryptophan + H2O. Its pathway is amino-acid biosynthesis; L-tryptophan biosynthesis; L-tryptophan from chorismate: step 5/5. Its function is as follows. The beta subunit is responsible for the synthesis of L-tryptophan from indole and L-serine. The chain is Tryptophan synthase beta chain from Prochlorococcus marinus (strain MIT 9215).